A 959-amino-acid chain; its full sequence is Isoleucine--tRNA ligase (959 aa).

The short motif at 66–76 (PYANGDLHIGH) is the 'HIGH' region element. Glu592 contacts L-isoleucyl-5'-AMP. Positions 633–637 (KMSKS) match the 'KMSKS' region motif. Lys636 is a binding site for ATP. 4 residues coordinate Zn(2+): Cys922, Cys925, Cys942, and Cys945.

It belongs to the class-I aminoacyl-tRNA synthetase family. IleS type 1 subfamily. As to quaternary structure, monomer. The cofactor is Zn(2+).

It localises to the cytoplasm. It catalyses the reaction tRNA(Ile) + L-isoleucine + ATP = L-isoleucyl-tRNA(Ile) + AMP + diphosphate. Its function is as follows. Catalyzes the attachment of isoleucine to tRNA(Ile). As IleRS can inadvertently accommodate and process structurally similar amino acids such as valine, to avoid such errors it has two additional distinct tRNA(Ile)-dependent editing activities. One activity is designated as 'pretransfer' editing and involves the hydrolysis of activated Val-AMP. The other activity is designated 'posttransfer' editing and involves deacylation of mischarged Val-tRNA(Ile). This is Isoleucine--tRNA ligase from Ralstonia pickettii (strain 12J).